The following is a 358-amino-acid chain: 4-hydroxy-2-oxovalerate aldolase 2 (358 aa).

One can recognise a Pyruvate carboxyltransferase domain in the interval 16–268 (VLLHDMCLRD…ETGVDLFKLM (253 aa)). Substrate is bound at residue 24–25 (RD). D25 is a Mn(2+) binding site. H28 acts as the Proton acceptor in catalysis. Residues S178 and H207 each coordinate substrate. Mn(2+) is bound by residues H207 and H209. Y298 contacts substrate.

Belongs to the 4-hydroxy-2-oxovalerate aldolase family.

It carries out the reaction (S)-4-hydroxy-2-oxopentanoate = acetaldehyde + pyruvate. The chain is 4-hydroxy-2-oxovalerate aldolase 2 from Methylibium petroleiphilum (strain ATCC BAA-1232 / LMG 22953 / PM1).